A 134-amino-acid polypeptide reads, in one-letter code: MAKAVALLLAAIAASAVLVQVECDAAVEKSFNKALLAPVDKRLDEAAQAINEAADSVVAAAPPAKKDEVEAATWKRRMFAITALGMAQGDEKKVAATSLAYKKAAKAVLDAAPADKFKLMDESFKVAVMQVIAS.

A signal peptide spans 1-16 (MAKAVALLLAAIAASA).

This is an uncharacterized protein from Oryza sativa subsp. indica (Rice).